We begin with the raw amino-acid sequence, 177 residues long: Large ribosomal subunit protein bL17 (177 aa).

Residues 136–177 (AEEEAPAVEAEATEAVEAPVEETAAAEAEAPAEEAADAEKAE) form a disordered region. The segment covering 138 to 149 (EEAPAVEAEATE) has biased composition (acidic residues). Low complexity predominate over residues 150 to 164 (AVEAPVEETAAAEAE).

This sequence belongs to the bacterial ribosomal protein bL17 family. As to quaternary structure, part of the 50S ribosomal subunit. Contacts protein L32.

The chain is Large ribosomal subunit protein bL17 from Bifidobacterium longum (strain NCC 2705).